The chain runs to 402 residues: 1-deoxy-D-xylulose 5-phosphate reductoisomerase (402 aa).

Residues Thr27, Gly28, Ser29, Ile30, Gly53, Lys54, Asn55, and Asn140 each contribute to the NADPH site. A 1-deoxy-D-xylulose 5-phosphate-binding site is contributed by Lys141. Glu142 provides a ligand contact to NADPH. Asp166 is a binding site for Mn(2+). Ser167, Glu168, Ser192, and His215 together coordinate 1-deoxy-D-xylulose 5-phosphate. Residue Glu168 participates in Mn(2+) binding. Gly221 lines the NADPH pocket. Residues Ser228, Asn233, Lys234, and Glu237 each contribute to the 1-deoxy-D-xylulose 5-phosphate site. Mn(2+) is bound at residue Glu237.

Belongs to the DXR family. The cofactor is Mg(2+). It depends on Mn(2+) as a cofactor.

The enzyme catalyses 2-C-methyl-D-erythritol 4-phosphate + NADP(+) = 1-deoxy-D-xylulose 5-phosphate + NADPH + H(+). It functions in the pathway isoprenoid biosynthesis; isopentenyl diphosphate biosynthesis via DXP pathway; isopentenyl diphosphate from 1-deoxy-D-xylulose 5-phosphate: step 1/6. Functionally, catalyzes the NADPH-dependent rearrangement and reduction of 1-deoxy-D-xylulose-5-phosphate (DXP) to 2-C-methyl-D-erythritol 4-phosphate (MEP). The protein is 1-deoxy-D-xylulose 5-phosphate reductoisomerase of Lawsonia intracellularis (strain PHE/MN1-00).